The sequence spans 360 residues: A-type ATP synthase subunit C (360 aa).

It belongs to the V-ATPase V0D/AC39 subunit family. Has multiple subunits, A(3), B(3), C, D, E, F, G, I and K(x); there may be a few other subunits as well.

The protein resides in the cell membrane. Its function is as follows. Component of the A-type ATP synthase that produces ATP from ADP in the presence of a proton gradient across the membrane. The polypeptide is A-type ATP synthase subunit C (Methanosarcina mazei (strain ATCC BAA-159 / DSM 3647 / Goe1 / Go1 / JCM 11833 / OCM 88) (Methanosarcina frisia)).